The following is a 403-amino-acid chain: Aminomethyltransferase, mitochondrial (403 aa).

The N-terminal 28 residues, 1–28, are a transit peptide targeting the mitochondrion; that stretch reads MQRAVSVVARLGFRLQAFPPALCRPLSC. 3 residues coordinate substrate: Glu232, Arg261, and Tyr399.

Belongs to the GcvT family. In terms of assembly, the glycine cleavage system is composed of four proteins: P, T, L and H.

It localises to the mitochondrion. It catalyses the reaction N(6)-[(R)-S(8)-aminomethyldihydrolipoyl]-L-lysyl-[protein] + (6S)-5,6,7,8-tetrahydrofolate = N(6)-[(R)-dihydrolipoyl]-L-lysyl-[protein] + (6R)-5,10-methylene-5,6,7,8-tetrahydrofolate + NH4(+). In terms of biological role, the glycine cleavage system catalyzes the degradation of glycine. The chain is Aminomethyltransferase, mitochondrial from Homo sapiens (Human).